The chain runs to 105 residues: UPF0148 protein PYRAB12700 (105 aa).

Belongs to the UPF0148 family.

This chain is UPF0148 protein PYRAB12700, found in Pyrococcus abyssi (strain GE5 / Orsay).